Reading from the N-terminus, the 157-residue chain is MATMHDKITLQLPAKPEYVSLGRLSLSGIASRAGFSYEAIEDLKIAVSEAITNSVKHAFKGEEDGEITVEYHIYEDKLEVRVSDNGTSFDLETRKQEIGPYEVGEDAEMMRIGGLGLFLIETLMDDVKLYYDEGVSVVMTKYINEKQVEENAKSIST.

This sequence belongs to the anti-sigma-factor family.

It catalyses the reaction L-seryl-[protein] + ATP = O-phospho-L-seryl-[protein] + ADP + H(+). It carries out the reaction L-threonyl-[protein] + ATP = O-phospho-L-threonyl-[protein] + ADP + H(+). In terms of biological role, negative regulator of sigma-B activity. Phosphorylates and inactivates its specific antagonist protein, RsbV. Upon phosphorylation of RsbV, RsbW is released and binds to sigma-B, thereby blocking its ability to form an RNA polymerase holoenzyme (E-sigma-B). This chain is Serine-protein kinase RsbW, found in Listeria innocua serovar 6a (strain ATCC BAA-680 / CLIP 11262).